The chain runs to 71 residues: Small, acid-soluble spore protein I (71 aa).

This sequence belongs to the SspI family.

It is found in the spore core. This chain is Small, acid-soluble spore protein I, found in Bacillus velezensis (strain DSM 23117 / BGSC 10A6 / LMG 26770 / FZB42) (Bacillus amyloliquefaciens subsp. plantarum).